A 364-amino-acid chain; its full sequence is Aminomethyltransferase (364 aa).

This sequence belongs to the GcvT family. The glycine cleavage system is composed of four proteins: P, T, L and H.

The catalysed reaction is N(6)-[(R)-S(8)-aminomethyldihydrolipoyl]-L-lysyl-[protein] + (6S)-5,6,7,8-tetrahydrofolate = N(6)-[(R)-dihydrolipoyl]-L-lysyl-[protein] + (6R)-5,10-methylene-5,6,7,8-tetrahydrofolate + NH4(+). Functionally, the glycine cleavage system catalyzes the degradation of glycine. The protein is Aminomethyltransferase of Thermotoga sp. (strain RQ2).